The chain runs to 342 residues: uncharacterized protein (342 aa).

This is an uncharacterized protein from Acanthamoeba polyphaga (Amoeba).